Consider the following 346-residue polypeptide: tRNA N6-adenosine threonylcarbamoyltransferase (346 aa).

Fe cation-binding residues include histidine 110 and histidine 114. Substrate contacts are provided by residues 132–136 (LLSGG), aspartate 165, glycine 178, and asparagine 274. Aspartate 298 is a Fe cation binding site.

Belongs to the KAE1 / TsaD family. Requires Fe(2+) as cofactor.

It is found in the cytoplasm. The catalysed reaction is L-threonylcarbamoyladenylate + adenosine(37) in tRNA = N(6)-L-threonylcarbamoyladenosine(37) in tRNA + AMP + H(+). In terms of biological role, required for the formation of a threonylcarbamoyl group on adenosine at position 37 (t(6)A37) in tRNAs that read codons beginning with adenine. Is involved in the transfer of the threonylcarbamoyl moiety of threonylcarbamoyl-AMP (TC-AMP) to the N6 group of A37, together with TsaE and TsaB. TsaD likely plays a direct catalytic role in this reaction. This Borreliella burgdorferi (strain ZS7) (Borrelia burgdorferi) protein is tRNA N6-adenosine threonylcarbamoyltransferase.